Here is a 104-residue protein sequence, read N- to C-terminus: UPF0235 protein M446_3939 (104 aa).

This sequence belongs to the UPF0235 family.

The polypeptide is UPF0235 protein M446_3939 (Methylobacterium sp. (strain 4-46)).